The following is a 193-amino-acid chain: Large ribosomal subunit protein uL18 (193 aa).

Belongs to the universal ribosomal protein uL18 family. As to quaternary structure, part of the 50S ribosomal subunit. Contacts the 5S and 23S rRNAs.

Its function is as follows. This is one of the proteins that bind and probably mediate the attachment of the 5S RNA into the large ribosomal subunit, where it forms part of the central protuberance. The chain is Large ribosomal subunit protein uL18 from Methanobrevibacter smithii (strain ATCC 35061 / DSM 861 / OCM 144 / PS).